The primary structure comprises 356 residues: Protein RecA (356 aa).

77-84 (GPESSGKT) lines the ATP pocket.

The protein belongs to the RecA family.

It localises to the cytoplasm. Functionally, can catalyze the hydrolysis of ATP in the presence of single-stranded DNA, the ATP-dependent uptake of single-stranded DNA by duplex DNA, and the ATP-dependent hybridization of homologous single-stranded DNAs. It interacts with LexA causing its activation and leading to its autocatalytic cleavage. This is Protein RecA from Caulobacter vibrioides (strain ATCC 19089 / CIP 103742 / CB 15) (Caulobacter crescentus).